Reading from the N-terminus, the 371-residue chain is Queuine tRNA-ribosyltransferase (371 aa).

Catalysis depends on Asp-89, which acts as the Proton acceptor. Substrate is bound by residues 89 to 93 (DSGGF), Asp-143, Gln-185, and Gly-212. An RNA binding region spans residues 243–249 (GVGTPED). Asp-262 (nucleophile) is an active-site residue. The tract at residues 267 to 271 (TRNAR) is RNA binding; important for wobble base 34 recognition. Residues Cys-300, Cys-302, Cys-305, and His-331 each coordinate Zn(2+).

It belongs to the queuine tRNA-ribosyltransferase family. As to quaternary structure, homodimer. Within each dimer, one monomer is responsible for RNA recognition and catalysis, while the other monomer binds to the replacement base PreQ1. Zn(2+) serves as cofactor.

It carries out the reaction 7-aminomethyl-7-carbaguanine + guanosine(34) in tRNA = 7-aminomethyl-7-carbaguanosine(34) in tRNA + guanine. Its pathway is tRNA modification; tRNA-queuosine biosynthesis. Its function is as follows. Catalyzes the base-exchange of a guanine (G) residue with the queuine precursor 7-aminomethyl-7-deazaguanine (PreQ1) at position 34 (anticodon wobble position) in tRNAs with GU(N) anticodons (tRNA-Asp, -Asn, -His and -Tyr). Catalysis occurs through a double-displacement mechanism. The nucleophile active site attacks the C1' of nucleotide 34 to detach the guanine base from the RNA, forming a covalent enzyme-RNA intermediate. The proton acceptor active site deprotonates the incoming PreQ1, allowing a nucleophilic attack on the C1' of the ribose to form the product. After dissociation, two additional enzymatic reactions on the tRNA convert PreQ1 to queuine (Q), resulting in the hypermodified nucleoside queuosine (7-(((4,5-cis-dihydroxy-2-cyclopenten-1-yl)amino)methyl)-7-deazaguanosine). The chain is Queuine tRNA-ribosyltransferase from Nitrosomonas europaea (strain ATCC 19718 / CIP 103999 / KCTC 2705 / NBRC 14298).